The chain runs to 141 residues: Large ribosomal subunit protein uL11 (141 aa).

It belongs to the universal ribosomal protein uL11 family. As to quaternary structure, part of the ribosomal stalk of the 50S ribosomal subunit. Interacts with L10 and the large rRNA to form the base of the stalk. L10 forms an elongated spine to which L12 dimers bind in a sequential fashion forming a multimeric L10(L12)X complex. In terms of processing, one or more lysine residues are methylated.

Its function is as follows. Forms part of the ribosomal stalk which helps the ribosome interact with GTP-bound translation factors. In Synechococcus sp. (strain CC9605), this protein is Large ribosomal subunit protein uL11.